The primary structure comprises 2094 residues: Non-reducing polyketide synthase ustP (2094 aa).

Positions 9-243 (VFGDLSVPYH…GKIQVGGLFH (235 aa)) are N-terminal acylcarrier protein transacylase (SAT) domain. The segment at 357–377 (NTAGVDSSSRGSGHADAEKQP) is disordered. Residues 379–813 (RSKIAIIGFS…GGNSSVLVED (435 aa)) enclose the Ketosynthase family 3 (KS3) domain. Catalysis depends on for beta-ketoacyl synthase activity residues Cys-551, His-686, and His-727. Residues 914–1227 (FSFTGQGSQY…EDDCKIFTPA (314 aa)) are malonyl-CoA:ACP transacylase (MAT) domain. The For acyl/malonyl transferase activity role is filled by Ser-1004. The interval 1305 to 1629 (TTSVQYITAE…QRKVLDLVLP (325 aa)) is product template (PT) domain. The tract at residues 1308–1445 (VQYITAESYG…CSGFFTDKSR (138 aa)) is N-terminal hotdog fold. One can recognise a PKS/mFAS DH domain in the interval 1308–1625 (VQYITAESYG…FAAVQRKVLD (318 aa)). His-1341 functions as the Proton acceptor; for dehydratase activity in the catalytic mechanism. Residues 1473–1625 (GSVHMIKTGM…FAAVQRKVLD (153 aa)) are C-terminal hotdog fold. Asp-1536 functions as the Proton donor; for dehydratase activity in the catalytic mechanism. Residues 1644 to 1671 (AAAAPSQRQQQQQQQQQQQPAQPVAASQ) are compositionally biased toward low complexity. The disordered stretch occupies residues 1644–1689 (AAAAPSQRQQQQQQQQQQQPAQPVAASQESGMDDMPPTLVPSEKKD). In terms of domain architecture, Carrier spans 1689 to 1763 (DVPSEKLKVI…ELVRHILGSS (75 aa)). Position 1723 is an O-(pantetheine 4'-phosphoryl)serine (Ser-1723). Polar residues predominate over residues 1762–1778 (SSTPSSDSGPATPSITP). Residues 1762 to 1782 (SSTPSSDSGPATPSITPLQEP) form a disordered region. Residues 1844–2069 (KVWLFPDGSG…GVVEGAHHFS (226 aa)) form a claisen cyclase domain region. Ser-1916 serves as the catalytic For Claisen cyclase activity.

The catalysed reaction is 6 malonyl-CoA + acetyl-CoA + 6 H(+) = naphtopyrone YWA1 + 6 CO2 + 7 CoA + H2O. It participates in secondary metabolite biosynthesis. Its function is as follows. Non-reducing polyketide synthase; part of the gene cluster that mediates the biosynthesis of ustilaginoidins, dimeric gamma-naphthopyrones isolated from different fungal species. The first step in the biosynthesis of ustilaginoidins is the production of gamma-naphthopyrone precursor YWA1 by the non-reducing polyketide synthase ustP, via condensation of one acetyl-CoA starter unit with 6 malonyl-CoA units. YWA1 is then probably substrate of the ustZ to yield norrubrofusarin via a dehydration reaction. A key enzyme in the biosynthetic pathway is the laccase ustL, which catalyzes the oxidative dimerization of norrubrofusarin to ustilaginoidin A. It can produce the M- and P-atropisomers in varying amounts, depending on the reaction conditions. For the biosynthesis of 3-methylustilaginoid in derivatives such as chaetochromin A, a methylated derivative of YWA1 is required. The C-methylation is considered to be catalyzed by ustM, the phosphopantetheine attachment site of which indicates that it acts on the growing polyketide chain before release of the product. For the biosynthesis of chaetochromin A, it is assumed that saturation of the D2 double bond takes place before dimerization, and is probably catalyzed by an external reductase because no candidate gene was identified within the cluster. The protein is Non-reducing polyketide synthase ustP of Ustilaginoidea virens (Rice false smut fungus).